The sequence spans 233 residues: Small ribosomal subunit protein uS2 (233 aa).

It belongs to the universal ribosomal protein uS2 family.

In Clostridium botulinum (strain Eklund 17B / Type B), this protein is Small ribosomal subunit protein uS2.